A 140-amino-acid chain; its full sequence is Short-chain diamines transporter (140 aa).

Transmembrane regions (helical) follow at residues 7 to 27, 36 to 56, 79 to 99, and 105 to 125; these read IFHA…AAAL, LALV…IYNL, VGFE…FLEI, and LMLE…FNWL.

This sequence belongs to the proteobacterial antimicrobial compound efflux (PACE) (TC 2.A.117) family.

The protein localises to the cell inner membrane. In terms of biological role, mediates the efflux of short-chain diamines when energized by an electrochemical gradient. Confers resistance to chlorhexidine, benzalkonium, proflavine and acriflavine. Mediates efflux of both proflavine and acriflavine via an energy-dependent mechanism. The polypeptide is Short-chain diamines transporter (Vibrio parahaemolyticus serotype O3:K6 (strain RIMD 2210633)).